Consider the following 199-residue polypeptide: Holliday junction branch migration complex subunit RuvA (199 aa).

A domain I region spans residues Met1–Gly65. A domain II region spans residues Ser66–Thr144. The flexible linker stretch occupies residues Thr145–Asp155. Residues Asp155–Arg199 form a domain III region.

This sequence belongs to the RuvA family. In terms of assembly, homotetramer. Forms an RuvA(8)-RuvB(12)-Holliday junction (HJ) complex. HJ DNA is sandwiched between 2 RuvA tetramers; dsDNA enters through RuvA and exits via RuvB. An RuvB hexamer assembles on each DNA strand where it exits the tetramer. Each RuvB hexamer is contacted by two RuvA subunits (via domain III) on 2 adjacent RuvB subunits; this complex drives branch migration. In the full resolvosome a probable DNA-RuvA(4)-RuvB(12)-RuvC(2) complex forms which resolves the HJ.

It is found in the cytoplasm. Functionally, the RuvA-RuvB-RuvC complex processes Holliday junction (HJ) DNA during genetic recombination and DNA repair, while the RuvA-RuvB complex plays an important role in the rescue of blocked DNA replication forks via replication fork reversal (RFR). RuvA specifically binds to HJ cruciform DNA, conferring on it an open structure. The RuvB hexamer acts as an ATP-dependent pump, pulling dsDNA into and through the RuvAB complex. HJ branch migration allows RuvC to scan DNA until it finds its consensus sequence, where it cleaves and resolves the cruciform DNA. The chain is Holliday junction branch migration complex subunit RuvA from Leptospira biflexa serovar Patoc (strain Patoc 1 / Ames).